The sequence spans 568 residues: Dihydroxy-acid dehydratase 1 (568 aa).

The tract at residues 1 to 22 (MAEQTNTPDLKPRSRDVTDGLE) is disordered. Positions 10–22 (LKPRSRDVTDGLE) are enriched in basic and acidic residues. Residue C57 participates in [2Fe-2S] cluster binding. D89 provides a ligand contact to Mg(2+). Position 130 (C130) interacts with [2Fe-2S] cluster. Residues D131 and K132 each coordinate Mg(2+). K132 carries the post-translational modification N6-carboxylysine. A [2Fe-2S] cluster-binding site is contributed by C207. E458 is a binding site for Mg(2+). S484 functions as the Proton acceptor in the catalytic mechanism.

Belongs to the IlvD/Edd family. As to quaternary structure, homodimer. Requires [2Fe-2S] cluster as cofactor. Mg(2+) is required as a cofactor.

The catalysed reaction is (2R)-2,3-dihydroxy-3-methylbutanoate = 3-methyl-2-oxobutanoate + H2O. The enzyme catalyses (2R,3R)-2,3-dihydroxy-3-methylpentanoate = (S)-3-methyl-2-oxopentanoate + H2O. It functions in the pathway amino-acid biosynthesis; L-isoleucine biosynthesis; L-isoleucine from 2-oxobutanoate: step 3/4. The protein operates within amino-acid biosynthesis; L-valine biosynthesis; L-valine from pyruvate: step 3/4. Its function is as follows. Functions in the biosynthesis of branched-chain amino acids. Catalyzes the dehydration of (2R,3R)-2,3-dihydroxy-3-methylpentanoate (2,3-dihydroxy-3-methylvalerate) into 2-oxo-3-methylpentanoate (2-oxo-3-methylvalerate) and of (2R)-2,3-dihydroxy-3-methylbutanoate (2,3-dihydroxyisovalerate) into 2-oxo-3-methylbutanoate (2-oxoisovalerate), the penultimate precursor to L-isoleucine and L-valine, respectively. This is Dihydroxy-acid dehydratase 1 from Nocardia farcinica (strain IFM 10152).